A 590-amino-acid chain; its full sequence is UvrABC system protein C (590 aa).

A GIY-YIG domain is found at 14-91; the sequence is DQPGCYLMKD…IKKYDPKYNV (78 aa). One can recognise a UVR domain in the interval 196–231; the sequence is NEIKKELEAKMAEAAEKLEFERAKEFRDQLAHIEST.

This sequence belongs to the UvrC family. In terms of assembly, interacts with UvrB in an incision complex.

It localises to the cytoplasm. Functionally, the UvrABC repair system catalyzes the recognition and processing of DNA lesions. UvrC both incises the 5' and 3' sides of the lesion. The N-terminal half is responsible for the 3' incision and the C-terminal half is responsible for the 5' incision. The polypeptide is UvrABC system protein C (Bacillus velezensis (strain DSM 23117 / BGSC 10A6 / LMG 26770 / FZB42) (Bacillus amyloliquefaciens subsp. plantarum)).